The chain runs to 649 residues: Mitochondrial Rho GTPase 1 (649 aa).

Over 1 to 623 (MTKETIRVVI…KPTNIDYSSA (623 aa)) the chain is Cytoplasmic. The 174-residue stretch at 3–176 (KETIRVVICG…FYLCQRSISY (174 aa)) folds into the Miro 1 domain. GTP is bound by residues 12–19 (GDDGVGKT), 61–63 (DTD), and 115–118 (NKCD). EF-hand domains follow at residues 192 to 227 (SAVA…CFGK) and 320 to 355 (KGYR…TPGL). Ca(2+) contacts are provided by aspartate 205, aspartate 207, aspartate 209, glutamate 216, aspartate 333, aspartate 335, aspartate 337, and glutamate 344. A Miro 2 domain is found at 436 to 601 (RKVFNCFVVG…FKKIIQASLE (166 aa)). Residues 445-452 (GKRNSGKS), 481-485 (EVTGD), and 550-553 (LKAD) contribute to the GTP site. Residues 624–644 (VILGSSIGFLALFSYTMIKLL) form a helical; Anchor for type IV membrane protein membrane-spanning segment. Topologically, residues 645–649 (KPTQQ) are mitochondrial intermembrane.

This sequence belongs to the mitochondrial Rho GTPase family.

It localises to the mitochondrion outer membrane. Its function is as follows. Mitochondrial GTPase involved in mitochondrial trafficking. Probably involved in control of anterograde transport of mitochondria and their subcellular distribution. This is Mitochondrial Rho GTPase 1 (GEM1) from Candida glabrata (strain ATCC 2001 / BCRC 20586 / JCM 3761 / NBRC 0622 / NRRL Y-65 / CBS 138) (Yeast).